Consider the following 279-residue polypeptide: 3-methyl-2-oxobutanoate hydroxymethyltransferase (279 aa).

Residues Asp-49 and Asp-88 each contribute to the Mg(2+) site. 3-methyl-2-oxobutanoate-binding positions include 49–50 (DS), Asp-88, and Lys-118. Glu-120 provides a ligand contact to Mg(2+). Catalysis depends on Glu-187, which acts as the Proton acceptor.

Belongs to the PanB family. Homodecamer; pentamer of dimers. The cofactor is Mg(2+).

It localises to the cytoplasm. It carries out the reaction 3-methyl-2-oxobutanoate + (6R)-5,10-methylene-5,6,7,8-tetrahydrofolate + H2O = 2-dehydropantoate + (6S)-5,6,7,8-tetrahydrofolate. It participates in cofactor biosynthesis; (R)-pantothenate biosynthesis; (R)-pantoate from 3-methyl-2-oxobutanoate: step 1/2. Catalyzes the reversible reaction in which hydroxymethyl group from 5,10-methylenetetrahydrofolate is transferred onto alpha-ketoisovalerate to form ketopantoate. This is 3-methyl-2-oxobutanoate hydroxymethyltransferase from Agrobacterium fabrum (strain C58 / ATCC 33970) (Agrobacterium tumefaciens (strain C58)).